The chain runs to 192 residues: MAKAQSKQATATNTPRLKQVYNETIRKALQEQFGYDNDMQVPRLDKIVLNMGVGEATADSKKPSVAAEDLALIAGQKAVVTRARNSIAGFKVRENMPIGAKVTLRKERMYEFLDRLVNIALPRVRDFRGLNPKSFDGRGNYAMGIKEHIVFPEINYDKVDQIWGMDVIVCTTAKTDDEARALLKAFNFPFRQ.

This sequence belongs to the universal ribosomal protein uL5 family. As to quaternary structure, part of the 50S ribosomal subunit; part of the 5S rRNA/L5/L18/L25 subcomplex. Contacts the 5S rRNA and the P site tRNA. Forms a bridge to the 30S subunit in the 70S ribosome.

In terms of biological role, this is one of the proteins that bind and probably mediate the attachment of the 5S RNA into the large ribosomal subunit, where it forms part of the central protuberance. In the 70S ribosome it contacts protein S13 of the 30S subunit (bridge B1b), connecting the 2 subunits; this bridge is implicated in subunit movement. Contacts the P site tRNA; the 5S rRNA and some of its associated proteins might help stabilize positioning of ribosome-bound tRNAs. This Mesorhizobium japonicum (strain LMG 29417 / CECT 9101 / MAFF 303099) (Mesorhizobium loti (strain MAFF 303099)) protein is Large ribosomal subunit protein uL5.